Here is a 224-residue protein sequence, read N- to C-terminus: N-terminal Xaa-Pro-Lys N-methyltransferase 1 (224 aa).

S-adenosyl-L-methionine is bound by residues G70, R75, 92–94 (DVT), 120–121 (LQ), and Q136.

It belongs to the methyltransferase superfamily. NTM1 family.

The protein resides in the nucleus. The catalysed reaction is N-terminal L-alanyl-L-prolyl-L-lysyl-[protein] + 3 S-adenosyl-L-methionine = N-terminal N,N,N-trimethyl-L-alanyl-L-prolyl-L-lysyl-[protein] + 3 S-adenosyl-L-homocysteine + 3 H(+). It catalyses the reaction N-terminal L-seryl-L-prolyl-L-lysyl-[protein] + 3 S-adenosyl-L-methionine = N-terminal N,N,N-trimethyl-L-seryl-L-prolyl-L-lysyl-[protein] + 3 S-adenosyl-L-homocysteine + 3 H(+). It carries out the reaction N-terminal L-prolyl-L-prolyl-L-lysyl-[protein] + 2 S-adenosyl-L-methionine = N-terminal N,N-dimethyl-L-prolyl-L-prolyl-L-lysyl-[protein] + 2 S-adenosyl-L-homocysteine + 2 H(+). Its function is as follows. Distributive alpha-N-methyltransferase that methylates the N-terminus of target proteins containing the N-terminal motif [Ala/Gly/Pro/Ser]-Pro-Lys when the initiator Met is cleaved. Specifically catalyzes mono-, di- or tri-methylation of the exposed alpha-amino group of the Ala, Gly or Ser residue in the [Ala/Gly/Ser]-Pro-Lys motif and mono- or di-methylation of Pro in the Pro-Pro-Lys motif. Required during mitosis for normal bipolar spindle formation and chromosome segregation via its action on target proteins. This is N-terminal Xaa-Pro-Lys N-methyltransferase 1 (ntmt1) from Xenopus tropicalis (Western clawed frog).